Reading from the N-terminus, the 549-residue chain is Cytoplasmic trehalase (549 aa).

Residues R168, 175 to 176 (WD), N212, 221 to 223 (RSQ), 292 to 294 (RDE), and G324 each bind substrate. Residues D326 and E509 each act as proton donor/acceptor in the active site. E525 lines the substrate pocket.

This sequence belongs to the glycosyl hydrolase 37 family. As to quaternary structure, monomer.

The protein resides in the cytoplasm. The enzyme catalyses alpha,alpha-trehalose + H2O = alpha-D-glucose + beta-D-glucose. The protein operates within glycan degradation; trehalose degradation; D-glucose from alpha,alpha-trehalose: step 1/1. Hydrolyzes trehalose to glucose. Could be involved, in cells returning to low osmolarity conditions, in the utilization of the accumulated cytoplasmic trehalose, which was synthesized in response to high osmolarity. The chain is Cytoplasmic trehalase from Shigella flexneri serotype 5b (strain 8401).